The primary structure comprises 193 residues: Segregation and condensation protein B (193 aa).

This sequence belongs to the ScpB family. Homodimer. Homodimerization may be required to stabilize the binding of ScpA to the Smc head domains. Component of a cohesin-like complex composed of ScpA, ScpB and the Smc homodimer, in which ScpA and ScpB bind to the head domain of Smc. The presence of the three proteins is required for the association of the complex with DNA.

The protein resides in the cytoplasm. Its function is as follows. Participates in chromosomal partition during cell division. May act via the formation of a condensin-like complex containing Smc and ScpA that pull DNA away from mid-cell into both cell halves. The sequence is that of Segregation and condensation protein B from Clostridium botulinum (strain 657 / Type Ba4).